Here is a 328-residue protein sequence, read N- to C-terminus: Cytochrome c biogenesis protein CcsA (328 aa).

The next 8 membrane-spanning stretches (helical) occupy residues 13 to 33 (ISFSVVSIVLTIYFLTLLVNL), 46 to 66 (GIIITFFGITGLLFTRWIYSG), 73 to 93 (LYESLIFLSWAFSIIHMVSYF), 101 to 121 (LNAITAPSAIFIQGFATSGLL), 146 to 166 (MILGYGALLCGSLLSIALLVI), 234 to 254 (IISLGFIFLTVGILSGAVWAN), 263 to 283 (WDPKETWAFITWTIFAIYLHI), and 295 to 315 (AIVASIGFLLIWICYFGVILL).

This sequence belongs to the CcmF/CycK/Ccl1/NrfE/CcsA family. As to quaternary structure, may interact with Ccs1.

The protein resides in the plastid. The protein localises to the chloroplast thylakoid membrane. Its function is as follows. Required during biogenesis of c-type cytochromes (cytochrome c6 and cytochrome f) at the step of heme attachment. This Crucihimalaya wallichii (Rock-cress) protein is Cytochrome c biogenesis protein CcsA.